The chain runs to 615 residues: Protein DBF4 homolog B (615 aa).

One can recognise a BRCT domain in the interval 43 to 133 (ARKHPFSGKS…DPKGSHPRPS (91 aa)). 2 disordered regions span residues 93–141 (REVK…DSVP) and 264–293 (FEAP…AHTM). Over residues 275–284 (HTRESKDGEP) the composition is skewed to basic and acidic residues. The segment at 294–343 (PRRKKGYCECCQEAFEELHVHLQSAQHRSFALEAHLYAEVDRIIAQLSHS) adopts a DBF4-type zinc-finger fold. Zn(2+)-binding residues include Cys301, Cys304, His314, and His320. Residues 371–407 (TLHPHQPSHPRAASPRIRKEDSCQASVTQGRAAGQQR) are disordered.

Forms a complex with CDC7. Note that CDC7 forms distinct complex either with DBF4/DBF4A or DBF4B. Such complexes are stable upon replication stress. Post-translationally, phosphorylated. As to expression, widely expressed. Highly expressed in testis.

Its subcellular location is the nucleus. Regulatory subunit for CDC7 which activates its kinase activity thereby playing a central role in DNA replication and cell proliferation. Required for progression of S and M phases. The complex CDC7-DBF4B selectively phosphorylates MCM2 subunit at 'Ser-40' and then is involved in regulating the initiation of DNA replication during cell cycle. The polypeptide is Protein DBF4 homolog B (DBF4B) (Homo sapiens (Human)).